The primary structure comprises 134 residues: Large ribosomal subunit protein bL20 (134 aa).

Belongs to the bacterial ribosomal protein bL20 family.

Its function is as follows. Binds directly to 23S ribosomal RNA and is necessary for the in vitro assembly process of the 50S ribosomal subunit. It is not involved in the protein synthesizing functions of that subunit. The polypeptide is Large ribosomal subunit protein bL20 (Brucella abortus (strain S19)).